A 417-amino-acid polypeptide reads, in one-letter code: L-rhamnose isomerase (417 aa).

The Mn(2+) site is built by His-260, Asp-292, and Asp-294.

The protein belongs to the rhamnose isomerase family. Requires Mn(2+) as cofactor.

It localises to the cytoplasm. It catalyses the reaction L-rhamnopyranose = L-rhamnulose. It participates in carbohydrate degradation; L-rhamnose degradation; glycerone phosphate from L-rhamnose: step 1/3. In terms of biological role, catalyzes the interconversion of L-rhamnose and L-rhamnulose. This chain is L-rhamnose isomerase, found in Mannheimia succiniciproducens (strain KCTC 0769BP / MBEL55E).